A 115-amino-acid chain; its full sequence is U17-barytoxin-Tl1b (115 aa).

An N-terminal signal peptide occupies residues methionine 1 to alanine 20. Positions lysine 21–arginine 74 are excised as a propeptide. Intrachain disulfides connect cysteine 75/cysteine 89, cysteine 82/cysteine 94, and cysteine 88/cysteine 109.

It belongs to the neurotoxin 14 (magi-1) family. 03 (ICK-30-40) subfamily. Expressed by the venom gland.

Its subcellular location is the secreted. Functionally, ion channel inhibitor. The chain is U17-barytoxin-Tl1b from Trittame loki (Brush-footed trapdoor spider).